The following is a 208-amino-acid chain: AN1-type zinc finger protein 6 (208 aa).

The A20-type zinc finger occupies 8–42; sequence SQVPMLCSTGCGFYGNPRTNGMCSVCYKEHLQRQN. 4 residues coordinate Zn(2+): Cys-14, Cys-18, Cys-30, and Cys-33. A compositionally biased stretch (polar residues) spans 41 to 68; sequence QNSSNGRISPPATSVSSLSESLPVQCTD. Residues 41–140 are disordered; sequence QNSSNGRISP…PSEEQSKSLE (100 aa). Ser-49 carries the post-translational modification Phosphoserine. Residues 80 to 94 are compositionally biased toward low complexity; the sequence is STSSSMQPSPVSNQS. Polar residues-rich tracts occupy residues 95–110 and 120–133; these read LLSESVASSQLDSTSV and VQASVSDTAQQPSE. The AN1-type zinc-finger motif lies at 143 to 189; that stretch reads KQKKNRCFMCRKKVGLTGFECRCGNVYCGVHRYSDVHNCSYNYKADA. 8 residues coordinate Zn(2+): Cys-149, Cys-152, Cys-163, Cys-165, Cys-170, His-173, His-179, and Cys-181. Lys-204 bears the N6-acetyllysine mark.

As to quaternary structure, interacts with PKN1. Interacts with TRAF2. Interacts with mono- and polyubiquitin. Interacts with PEX6. Interacts with PEX5 (Cys-linked ubiquitinated). Widely expressed with high level in heart, skeletal muscle, liver, kidney and placenta.

The protein localises to the cytoplasm. In terms of biological role, involved in regulation of TNF-alpha induced NF-kappa-B activation and apoptosis. Involved in modulation of 'Lys-48'-linked polyubiquitination status of TRAF2 and decreases association of TRAF2 with RIPK1. Required for PTS1 target sequence-dependent protein import into peroxisomes and PEX5 stability; may cooperate with PEX6. In vitro involved in PEX5 export from the cytosol to peroxisomes. The sequence is that of AN1-type zinc finger protein 6 (ZFAND6) from Homo sapiens (Human).